A 422-amino-acid polypeptide reads, in one-letter code: Tyrosine--tRNA ligase 1 (422 aa).

Tyr36 contacts L-tyrosine. The 'HIGH' region motif lies at 41–50 (PTAGSLHIGH). 2 residues coordinate L-tyrosine: Tyr173 and Gln177. The 'KMSKS' region signature appears at 233–237 (KFGKT). Lys236 serves as a coordination point for ATP. In terms of domain architecture, S4 RNA-binding spans 355 to 419 (SDVVTLLLET…GKKQFAMVKL (65 aa)).

It belongs to the class-I aminoacyl-tRNA synthetase family. TyrS type 1 subfamily. In terms of assembly, homodimer.

The protein resides in the cytoplasm. It carries out the reaction tRNA(Tyr) + L-tyrosine + ATP = L-tyrosyl-tRNA(Tyr) + AMP + diphosphate + H(+). Functionally, catalyzes the attachment of tyrosine to tRNA(Tyr) in a two-step reaction: tyrosine is first activated by ATP to form Tyr-AMP and then transferred to the acceptor end of tRNA(Tyr). The protein is Tyrosine--tRNA ligase 1 of Vibrio vulnificus (strain CMCP6).